Consider the following 289-residue polypeptide: MNRVSFIKTPFNIGAKWRLEDVFLLIIMILLNYPVYYQQPFERQFYINDLTISHPYATTERVNNNMLFVYSFVVPSLTILIIGSILADRRHLIFILYTSLLGLSLAWFSTSFFTNFIKNWIGRLRPDFLDRCQPVEGLPLDTLFTAKDVCTTKNHERLLDGFRTTPSGHSSESFAGLGYLYFWLCGQLLTESPLMPLWRKMVAFLPLLGAALIALSRTQDYRHHFVDVILGSMLGYIMAHFFYRRIFPPIDDPLPFKPLMDDSDVTLEEAVTHQRIPDEELHPLSDEGM.

At 1 to 21 the chain is on the vacuolar side; sequence MNRVSFIKTPFNIGAKWRLED. Residues 22 to 42 traverse the membrane as a helical segment; it reads VFLLIIMILLNYPVYYQQPFE. Residues 43 to 65 are Cytoplasmic-facing; the sequence is RQFYINDLTISHPYATTERVNNN. The chain crosses the membrane as a helical span at residues 66 to 86; it reads MLFVYSFVVPSLTILIIGSIL. The Vacuolar portion of the chain corresponds to 87 to 92; that stretch reads ADRRHL. The chain crosses the membrane as a helical span at residues 93–113; the sequence is IFILYTSLLGLSLAWFSTSFF. Topologically, residues 114–172 are cytoplasmic; that stretch reads TNFIKNWIGRLRPDFLDRCQPVEGLPLDTLFTAKDVCTTKNHERLLDGFRTTPSGHSSE. The interval 118-126 is phosphatase sequence motif I; sequence KNWIGRLRP. Positions 166 to 169 are phosphatase sequence motif II; that stretch reads PSGH. 2 helical membrane passes run 173 to 193 and 194 to 214; these read SFAG…TESP and LMPL…ALIA. Topologically, residues 215–222 are cytoplasmic; the sequence is LSRTQDYR. The phosphatase sequence motif III stretch occupies residues 216 to 227; sequence SRTQDYRHHFVD. Residues 223 to 243 form a helical membrane-spanning segment; it reads HHFVDVILGSMLGYIMAHFFY. The Vacuolar portion of the chain corresponds to 244–289; sequence RRIFPPIDDPLPFKPLMDDSDVTLEEAVTHQRIPDEELHPLSDEGM. A Phosphoserine modification is found at Ser-285.

It belongs to the PA-phosphatase related phosphoesterase family.

The protein localises to the vacuole membrane. It catalyses the reaction a 1,2-diacyl-sn-glycerol 3-diphosphate + H2O = a 1,2-diacyl-sn-glycero-3-phosphate + phosphate + H(+). It carries out the reaction a 1,2-diacyl-sn-glycero-3-phosphate + H2O = a 1,2-diacyl-sn-glycerol + phosphate. The catalysed reaction is a 1-acyl-sn-glycero-3-phosphate + H2O = a 1-acyl-sn-glycerol + phosphate. With respect to regulation, inhibited by sodium fluoride (NaF) and pyrophosphate. Strongly inhibited by manganese ion and, to a lower extent, by magnesium and calcium ions. Also inhibited by Cu(2+) ion. In an indirect manner, it is also inhibited by the zinc ion which is able to form a complex with DGPP and prevent the enzyme from removing the phosphate from the substrate. Not inhibited by N-ethylmaleimide. In terms of biological role, catalyzes the dephosphorylation of diacylglycerol diphosphate (DGPP) to phosphatidate (PA) and the subsequent dephosphorylation of PA to diacylglycerol (DAG). Together with LPP1, regulates intracellular DGPP and PA levels, which are phospholipid molecules believed to play a signaling role in stress response. Can also use lysophosphatidic acid (LPA) and phosphatidylglycerophosphate as substrates. Substrate preference is DGPP &gt; LPA &gt; PA. Activity is independent of a divalent cation ion and insensitive to inhibition by N-ethylmaleimide. This is Diacylglycerol pyrophosphate phosphatase 1 (DPP1) from Saccharomyces cerevisiae (strain ATCC 204508 / S288c) (Baker's yeast).